We begin with the raw amino-acid sequence, 94 residues long: Pyrimidine/purine nucleoside phosphorylase (94 aa).

It belongs to the nucleoside phosphorylase PpnP family.

The catalysed reaction is a purine D-ribonucleoside + phosphate = a purine nucleobase + alpha-D-ribose 1-phosphate. It carries out the reaction adenosine + phosphate = alpha-D-ribose 1-phosphate + adenine. The enzyme catalyses cytidine + phosphate = cytosine + alpha-D-ribose 1-phosphate. It catalyses the reaction guanosine + phosphate = alpha-D-ribose 1-phosphate + guanine. The catalysed reaction is inosine + phosphate = alpha-D-ribose 1-phosphate + hypoxanthine. It carries out the reaction thymidine + phosphate = 2-deoxy-alpha-D-ribose 1-phosphate + thymine. The enzyme catalyses uridine + phosphate = alpha-D-ribose 1-phosphate + uracil. It catalyses the reaction xanthosine + phosphate = alpha-D-ribose 1-phosphate + xanthine. Functionally, catalyzes the phosphorolysis of diverse nucleosides, yielding D-ribose 1-phosphate and the respective free bases. Can use uridine, adenosine, guanosine, cytidine, thymidine, inosine and xanthosine as substrates. Also catalyzes the reverse reactions. The protein is Pyrimidine/purine nucleoside phosphorylase of Alcanivorax borkumensis (strain ATCC 700651 / DSM 11573 / NCIMB 13689 / SK2).